A 194-amino-acid polypeptide reads, in one-letter code: Ribonuclease HII (194 aa).

The RNase H type-2 domain occupies 3 to 193 (ILTAGVDEAG…VRNLLAQQAL (191 aa)). A divalent metal cation contacts are provided by D9, E10, and D101.

This sequence belongs to the RNase HII family. The cofactor is Mn(2+). Mg(2+) serves as cofactor.

The protein resides in the cytoplasm. The catalysed reaction is Endonucleolytic cleavage to 5'-phosphomonoester.. Its function is as follows. Endonuclease that specifically degrades the RNA of RNA-DNA hybrids. This is Ribonuclease HII (rnhB) from Neisseria meningitidis serogroup A / serotype 4A (strain DSM 15465 / Z2491).